Reading from the N-terminus, the 337-residue chain is Dimethyladenosine transferase 1, mitochondrial (337 aa).

A mitochondrion-targeting transit peptide spans 1-84; it reads MSQVTARVLN…RSILRRQPQR (84 aa). Residues 38–41, asparagine 39, leucine 41, glycine 67, glutamate 89, aspartate 118, and asparagine 140 each bind S-adenosyl-L-methionine; that span reads QNFL.

The protein belongs to the class I-like SAM-binding methyltransferase superfamily. rRNA adenine N(6)-methyltransferase family. KsgA subfamily.

The protein resides in the mitochondrion. In terms of biological role, probable S-adenosyl-L-methionine-dependent methyltransferase which specifically dimethylates mitochondrial 12S rRNA at the conserved stem loop. This is Dimethyladenosine transferase 1, mitochondrial (mtTFB1) from Drosophila pseudoobscura pseudoobscura (Fruit fly).